The following is an 88-amino-acid chain: Small ribosomal subunit protein bS20 (88 aa).

It belongs to the bacterial ribosomal protein bS20 family.

In terms of biological role, binds directly to 16S ribosomal RNA. The sequence is that of Small ribosomal subunit protein bS20 from Bartonella quintana (strain Toulouse) (Rochalimaea quintana).